The following is a 388-amino-acid chain: Succinate--CoA ligase [ADP-forming] subunit beta (388 aa).

Residues 9 to 244 (KQLFAEYGLP…PSQDDPREAH (236 aa)) form the ATP-grasp domain. Residues Lys46, 53-55 (GRG), Glu99, Thr102, and Glu107 each bind ATP. Positions 199 and 213 each coordinate Mg(2+). Residues Asn264 and 321–323 (GIV) contribute to the substrate site.

Belongs to the succinate/malate CoA ligase beta subunit family. In terms of assembly, heterotetramer of two alpha and two beta subunits. Mg(2+) serves as cofactor.

The catalysed reaction is succinate + ATP + CoA = succinyl-CoA + ADP + phosphate. It catalyses the reaction GTP + succinate + CoA = succinyl-CoA + GDP + phosphate. It functions in the pathway carbohydrate metabolism; tricarboxylic acid cycle; succinate from succinyl-CoA (ligase route): step 1/1. Succinyl-CoA synthetase functions in the citric acid cycle (TCA), coupling the hydrolysis of succinyl-CoA to the synthesis of either ATP or GTP and thus represents the only step of substrate-level phosphorylation in the TCA. The beta subunit provides nucleotide specificity of the enzyme and binds the substrate succinate, while the binding sites for coenzyme A and phosphate are found in the alpha subunit. This chain is Succinate--CoA ligase [ADP-forming] subunit beta, found in Pseudomonas putida (strain GB-1).